Here is a 402-residue protein sequence, read N- to C-terminus: 1-deoxy-D-xylulose 5-phosphate reductoisomerase (402 aa).

Positions 13, 14, 15, 16, and 126 each coordinate NADPH. Lysine 127 serves as a coordination point for 1-deoxy-D-xylulose 5-phosphate. Glutamate 128 is an NADPH binding site. Aspartate 152 is a Mn(2+) binding site. 1-deoxy-D-xylulose 5-phosphate contacts are provided by serine 153, glutamate 154, serine 188, and histidine 211. Glutamate 154 lines the Mn(2+) pocket. Residue glycine 217 coordinates NADPH. 1-deoxy-D-xylulose 5-phosphate contacts are provided by serine 224, asparagine 229, lysine 230, and glutamate 233. A Mn(2+)-binding site is contributed by glutamate 233.

It belongs to the DXR family. Requires Mg(2+) as cofactor. The cofactor is Mn(2+).

It carries out the reaction 2-C-methyl-D-erythritol 4-phosphate + NADP(+) = 1-deoxy-D-xylulose 5-phosphate + NADPH + H(+). It participates in isoprenoid biosynthesis; isopentenyl diphosphate biosynthesis via DXP pathway; isopentenyl diphosphate from 1-deoxy-D-xylulose 5-phosphate: step 1/6. Functionally, catalyzes the NADPH-dependent rearrangement and reduction of 1-deoxy-D-xylulose-5-phosphate (DXP) to 2-C-methyl-D-erythritol 4-phosphate (MEP). The polypeptide is 1-deoxy-D-xylulose 5-phosphate reductoisomerase (Psychrobacter arcticus (strain DSM 17307 / VKM B-2377 / 273-4)).